The chain runs to 197 residues: Nucleoid occlusion factor SlmA (197 aa).

The HTH tetR-type domain maps to 7–67; that stretch reads INRREHILQC…GLIEFIEDAI (61 aa). The H-T-H motif DNA-binding region spans 30–49; sequence TTAKLAAEVGVSEAALYRHF. Residues 110 to 130 adopt a coiled-coil conformation; it reads ALLGENERLRSRIDVLFAKIE.

The protein belongs to the nucleoid occlusion factor SlmA family. As to quaternary structure, homodimer. Interacts with FtsZ.

It localises to the cytoplasm. It is found in the nucleoid. Required for nucleoid occlusion (NO) phenomenon, which prevents Z-ring formation and cell division over the nucleoid. Acts as a DNA-associated cell division inhibitor that binds simultaneously chromosomal DNA and FtsZ, and disrupts the assembly of FtsZ polymers. SlmA-DNA-binding sequences (SBS) are dispersed on non-Ter regions of the chromosome, preventing FtsZ polymerization at these regions. This Shewanella frigidimarina (strain NCIMB 400) protein is Nucleoid occlusion factor SlmA.